Here is a 178-residue protein sequence, read N- to C-terminus: Alkyl hydroperoxide reductase AhpD (178 aa).

Residue C131 is the Proton donor of the active site. A disulfide bond links C131 and C134. C134 serves as the catalytic Cysteine sulfenic acid (-SOH) intermediate.

It belongs to the AhpD family.

It catalyses the reaction N(6)-[(R)-dihydrolipoyl]-L-lysyl-[lipoyl-carrier protein] + a hydroperoxide = N(6)-[(R)-lipoyl]-L-lysyl-[lipoyl-carrier protein] + an alcohol + H2O. Antioxidant protein with alkyl hydroperoxidase activity. Required for the reduction of the AhpC active site cysteine residues and for the regeneration of the AhpC enzyme activity. The polypeptide is Alkyl hydroperoxide reductase AhpD (Methylocella silvestris (strain DSM 15510 / CIP 108128 / LMG 27833 / NCIMB 13906 / BL2)).